A 270-amino-acid polypeptide reads, in one-letter code: 4-hydroxy-tetrahydrodipicolinate reductase (270 aa).

An NAD(+)-binding site is contributed by 7–12 (GVSGRM). R34 lines the NADP(+) pocket. NAD(+) contacts are provided by residues 97–99 (GTT) and 121–124 (SGNM). H155 serves as the catalytic Proton donor/acceptor. H156 contacts (S)-2,3,4,5-tetrahydrodipicolinate. The Proton donor role is filled by K159. Position 165 to 166 (165 to 166 (GT)) interacts with (S)-2,3,4,5-tetrahydrodipicolinate.

This sequence belongs to the DapB family.

The protein resides in the cytoplasm. It carries out the reaction (S)-2,3,4,5-tetrahydrodipicolinate + NAD(+) + H2O = (2S,4S)-4-hydroxy-2,3,4,5-tetrahydrodipicolinate + NADH + H(+). The enzyme catalyses (S)-2,3,4,5-tetrahydrodipicolinate + NADP(+) + H2O = (2S,4S)-4-hydroxy-2,3,4,5-tetrahydrodipicolinate + NADPH + H(+). It functions in the pathway amino-acid biosynthesis; L-lysine biosynthesis via DAP pathway; (S)-tetrahydrodipicolinate from L-aspartate: step 4/4. Functionally, catalyzes the conversion of 4-hydroxy-tetrahydrodipicolinate (HTPA) to tetrahydrodipicolinate. In Allorhizobium ampelinum (strain ATCC BAA-846 / DSM 112012 / S4) (Agrobacterium vitis (strain S4)), this protein is 4-hydroxy-tetrahydrodipicolinate reductase.